A 155-amino-acid chain; its full sequence is Small ribosomal subunit protein uS7cz/uS7cy (155 aa).

The protein belongs to the universal ribosomal protein uS7 family. Part of the 30S ribosomal subunit.

The protein resides in the plastid. It localises to the chloroplast. Its function is as follows. One of the primary rRNA binding proteins, it binds directly to 16S rRNA where it nucleates assembly of the head domain of the 30S subunit. This Anthoceros angustus (Hornwort) protein is Small ribosomal subunit protein uS7cz/uS7cy (rps7-A).